A 239-amino-acid chain; its full sequence is LexA repressor (239 aa).

The segment at residues 26–46 is a DNA-binding region (H-T-H motif); that stretch reads FDEMKDALDLKSKSGIHRLIT. Active-site for autocatalytic cleavage activity residues include Ser-160 and Lys-198.

The protein belongs to the peptidase S24 family. In terms of assembly, homodimer.

The enzyme catalyses Hydrolysis of Ala-|-Gly bond in repressor LexA.. Represses a number of genes involved in the response to DNA damage (SOS response), including recA and lexA. In the presence of single-stranded DNA, RecA interacts with LexA causing an autocatalytic cleavage which disrupts the DNA-binding part of LexA, leading to derepression of the SOS regulon and eventually DNA repair. This chain is LexA repressor, found in Methylobacterium sp. (strain 4-46).